A 205-amino-acid polypeptide reads, in one-letter code: Imidazole glycerol phosphate synthase subunit HisH (205 aa).

Positions R3–I205 constitute a Glutamine amidotransferase type-1 domain. C80 (nucleophile) is an active-site residue. Catalysis depends on residues H185 and E187.

In terms of assembly, heterodimer of HisH and HisF.

It localises to the cytoplasm. The enzyme catalyses 5-[(5-phospho-1-deoxy-D-ribulos-1-ylimino)methylamino]-1-(5-phospho-beta-D-ribosyl)imidazole-4-carboxamide + L-glutamine = D-erythro-1-(imidazol-4-yl)glycerol 3-phosphate + 5-amino-1-(5-phospho-beta-D-ribosyl)imidazole-4-carboxamide + L-glutamate + H(+). The catalysed reaction is L-glutamine + H2O = L-glutamate + NH4(+). It participates in amino-acid biosynthesis; L-histidine biosynthesis; L-histidine from 5-phospho-alpha-D-ribose 1-diphosphate: step 5/9. IGPS catalyzes the conversion of PRFAR and glutamine to IGP, AICAR and glutamate. The HisH subunit catalyzes the hydrolysis of glutamine to glutamate and ammonia as part of the synthesis of IGP and AICAR. The resulting ammonia molecule is channeled to the active site of HisF. This is Imidazole glycerol phosphate synthase subunit HisH from Acinetobacter baylyi (strain ATCC 33305 / BD413 / ADP1).